We begin with the raw amino-acid sequence, 915 residues long: Protein MEI2-like 1 (915 aa).

Positions 1–90 are disordered; sequence MPSDIMEQRG…NTTNGSQWES (90 aa). A compositionally biased stretch (basic and acidic residues) spans 16 to 25; the sequence is HFHEDIHITS. Residues 50 to 65 show a composition bias toward polar residues; it reads MPKSSWTSESYQLKPQ. Residues 66–77 show a composition bias toward low complexity; the sequence is SSFSGSHPSGSP. S76 is modified (phosphoserine). Residues 78–89 are compositionally biased toward polar residues; it reads NARNTTNGSQWE. RRM domains are found at residues 217–290 and 302–375; these read RTLL…YSIS and GALL…PTYP. Disordered regions lie at residues 690–723 and 854–915; these read PGRS…SSSN and LFHT…LKEN. Basic and acidic residues predominate over residues 705-723; that stretch reads PNERYRNLSHRRSESSSSN. Positions 882–898 are enriched in polar residues; sequence RSSSIDNYNSFSISSVS.

Expressed in roots, shoots, leaves, flowers and siliques.

Functionally, probable RNA-binding transcriptional activator that plays a role in meiosis and vegetative growth. May be a downstream effector of TOR signaling pathway and recruited by RAPTOR1 for TOR substrate. This Arabidopsis thaliana (Mouse-ear cress) protein is Protein MEI2-like 1 (ML1).